The chain runs to 393 residues: Bone morphogenetic protein 15 (393 aa).

Residues 1-25 (MVLLSILRILLWGLVLFMEHRVQMT) form the signal peptide. Positions 26 to 268 (QVGQPSIAHL…DPSLLLRRAR (243 aa)) are excised as a propeptide. 2 N-linked (GlcNAc...) asparagine glycosylation sites follow: asparagine 86 and asparagine 237. Disulfide bonds link cysteine 292–cysteine 358, cysteine 321–cysteine 390, and cysteine 325–cysteine 392. A glycan (N-linked (GlcNAc...) asparagine) is linked at asparagine 374.

This sequence belongs to the TGF-beta family. As to quaternary structure, homodimer. But, in contrast to other members of this family, cannot be disulfide-linked.

It is found in the secreted. Functionally, may be involved in follicular development. Oocyte-specific growth/differentiation factor that stimulates folliculogenesis and granulosa cell (GC) growth. The polypeptide is Bone morphogenetic protein 15 (BMP15) (Ovis aries (Sheep)).